Consider the following 256-residue polypeptide: uncharacterized protein (256 aa).

The N-terminal stretch at methionine 1 to glycine 24 is a signal peptide. Cysteine 25 is lipidated: N-palmitoyl cysteine. Cysteine 25 carries S-diacylglycerol cysteine lipidation.

Belongs to the staphylococcal tandem lipoprotein family.

It localises to the cell membrane. This is an uncharacterized protein from Staphylococcus aureus (strain bovine RF122 / ET3-1).